A 419-amino-acid chain; its full sequence is S-adenosylmethionine synthase (419 aa).

His-15 is an ATP binding site. Asp-17 is a Mg(2+) binding site. Glu-43 is a K(+) binding site. L-methionine is bound by residues Glu-56 and Gln-100. The interval 100-110 (QSPDIAQGVDE) is flexible loop. ATP contacts are provided by residues 171–173 (DGK), 248–249 (KF), Asp-257, 263–264 (RK), Ala-280, and Lys-284. Residue Asp-257 participates in L-methionine binding. Lys-288 serves as a coordination point for L-methionine.

Belongs to the AdoMet synthase family. Homotetramer; dimer of dimers. Requires Mg(2+) as cofactor. K(+) serves as cofactor.

It localises to the cytoplasm. The catalysed reaction is L-methionine + ATP + H2O = S-adenosyl-L-methionine + phosphate + diphosphate. It participates in amino-acid biosynthesis; S-adenosyl-L-methionine biosynthesis; S-adenosyl-L-methionine from L-methionine: step 1/1. Catalyzes the formation of S-adenosylmethionine (AdoMet) from methionine and ATP. The overall synthetic reaction is composed of two sequential steps, AdoMet formation and the subsequent tripolyphosphate hydrolysis which occurs prior to release of AdoMet from the enzyme. The sequence is that of S-adenosylmethionine synthase from Parasynechococcus marenigrum (strain WH8102).